A 1118-amino-acid polypeptide reads, in one-letter code: Cytospin-A (1118 aa).

Disordered regions lie at residues 1-50 (MKKA…AALS), 75-175 (KKSN…DNQI), 294-324 (SLSPEITPGNQSDGGGTLTSSVEGSAPGSVE), and 359-391 (SSDDALDAPSSSESEGVPSIERSRKGSSGNASE). Low complexity-rich tracts occupy residues 34-48 (APTGGKPVKPGAAAA), 80-90 (SSAAPSAPAPA), and 99-113 (KSSTGTSSSAKRSTS). Residues 120 to 131 (SSTRERLRERTR) show a composition bias toward basic and acidic residues. Polar residues predominate over residues 133 to 145 (NQSKKLPSVSQGA). A compositionally biased stretch (basic and acidic residues) spans 158 to 171 (TATEGDIRMSKSKS). Positions 168-281 (KSKSDNQISD…LNALGFSLEQ (114 aa)) form a coiled coil. Polar residues predominate over residues 294-304 (SLSPEITPGNQ). Over residues 359–373 (SSDDALDAPSSSESE) the composition is skewed to low complexity. Phosphoserine is present on residues Ser-385, Ser-386, and Ser-390. 2 coiled-coil regions span residues 395–450 (ACLT…MESL) and 488–808 (RYME…RGRV). Residues Ser-869, Ser-882, and Ser-888 each carry the phosphoserine modification. A disordered region spans residues 916–999 (EHLLRTSSTS…STRSRIREER (84 aa)). Over residues 947–957 (RSSEEMKRDIS) the composition is skewed to basic and acidic residues. Residues 972–992 (TTSPQLSLSSSPTASVTPSTR) are compositionally biased toward low complexity. Positions 1012–1117 (GSKRNALLKW…YVTAIYKYFE (106 aa)) constitute a Calponin-homology (CH) domain.

This sequence belongs to the cytospin-A family. As to quaternary structure, may interact with both microtubules and actin cytoskeleton.

It is found in the cytoplasm. It localises to the cytoskeleton. The protein localises to the spindle. Its subcellular location is the cell junction. The protein resides in the gap junction. Functionally, involved in cytokinesis and spindle organization. May play a role in actin cytoskeleton organization and microtubule stabilization and hence required for proper cell adhesion and migration. In Rattus norvegicus (Rat), this protein is Cytospin-A (Specc1l).